Consider the following 536-residue polypeptide: ATP synthase subunit beta (536 aa).

The segment at 1–57 (MVKAVSSSKGAAKVEQKKSAARSGVKKNASKSQASLQDTSSPLKTSSKNAHAKKDVQ) is disordered. Positions 30 to 49 (SKSQASLQDTSSPLKTSSKN) are enriched in polar residues. 208 to 215 (GGAGVGKT) serves as a coordination point for ATP.

The protein belongs to the ATPase alpha/beta chains family. F-type ATPases have 2 components, CF(1) - the catalytic core - and CF(0) - the membrane proton channel. CF(1) has five subunits: alpha(3), beta(3), gamma(1), delta(1), epsilon(1). CF(0) has three main subunits: a(1), b(2) and c(9-12). The alpha and beta chains form an alternating ring which encloses part of the gamma chain. CF(1) is attached to CF(0) by a central stalk formed by the gamma and epsilon chains, while a peripheral stalk is formed by the delta and b chains.

It is found in the cell inner membrane. It carries out the reaction ATP + H2O + 4 H(+)(in) = ADP + phosphate + 5 H(+)(out). Functionally, produces ATP from ADP in the presence of a proton gradient across the membrane. The catalytic sites are hosted primarily by the beta subunits. In Bartonella quintana (strain Toulouse) (Rochalimaea quintana), this protein is ATP synthase subunit beta.